The chain runs to 364 residues: Aminomethyltransferase (364 aa).

Belongs to the GcvT family. The glycine cleavage system is composed of four proteins: P, T, L and H.

The enzyme catalyses N(6)-[(R)-S(8)-aminomethyldihydrolipoyl]-L-lysyl-[protein] + (6S)-5,6,7,8-tetrahydrofolate = N(6)-[(R)-dihydrolipoyl]-L-lysyl-[protein] + (6R)-5,10-methylene-5,6,7,8-tetrahydrofolate + NH4(+). Its function is as follows. The glycine cleavage system catalyzes the degradation of glycine. This Shewanella denitrificans (strain OS217 / ATCC BAA-1090 / DSM 15013) protein is Aminomethyltransferase.